A 225-amino-acid polypeptide reads, in one-letter code: Biosynthetic peptidoglycan transglycosylase (225 aa).

Residues 7–27 (SFLFKMVLILLIAPIVLVGVV) form a helical membrane-spanning segment.

Belongs to the glycosyltransferase 51 family.

The protein resides in the cell inner membrane. The catalysed reaction is [GlcNAc-(1-&gt;4)-Mur2Ac(oyl-L-Ala-gamma-D-Glu-L-Lys-D-Ala-D-Ala)](n)-di-trans,octa-cis-undecaprenyl diphosphate + beta-D-GlcNAc-(1-&gt;4)-Mur2Ac(oyl-L-Ala-gamma-D-Glu-L-Lys-D-Ala-D-Ala)-di-trans,octa-cis-undecaprenyl diphosphate = [GlcNAc-(1-&gt;4)-Mur2Ac(oyl-L-Ala-gamma-D-Glu-L-Lys-D-Ala-D-Ala)](n+1)-di-trans,octa-cis-undecaprenyl diphosphate + di-trans,octa-cis-undecaprenyl diphosphate + H(+). The protein operates within cell wall biogenesis; peptidoglycan biosynthesis. Peptidoglycan polymerase that catalyzes glycan chain elongation from lipid-linked precursors. This Vibrio parahaemolyticus serotype O3:K6 (strain RIMD 2210633) protein is Biosynthetic peptidoglycan transglycosylase.